The chain runs to 530 residues: Cilia- and flagella-associated protein 97 (530 aa).

S19 carries the post-translational modification Phosphoserine. 2 disordered regions span residues 29–83 (TNSV…PVEN) and 116–258 (IPNR…LSTP). Residues 35–49 (KQNDDPKERIDKDTK) show a composition bias toward basic and acidic residues. A compositionally biased stretch (polar residues) spans 50–63 (NVNSNTGMQTTENY). Over residues 67 to 82 (KGNERNVKFPPEHPVE) the composition is skewed to basic and acidic residues. The span at 129 to 139 (GDYYTDGEESS) shows a compositional bias: acidic residues. T133 is subject to Phosphothreonine. Residues S138 and S139 each carry the phosphoserine modification. Low complexity predominate over residues 170 to 203 (SSSSSSSLSSSSSGSGTDCLDGGSDSHLSDSSPS). Phosphoserine is present on S215. Polar residues predominate over residues 227–236 (TETQPSSTTP). S245 and S327 each carry phosphoserine. Residues 372 to 447 (KNYSFTREEV…ALLKRLEAVK (76 aa)) adopt a coiled-coil conformation. Disordered stretches follow at residues 395-417 (LSRQAEKPGSKSTIPRSADHPPK) and 483-530 (QYSP…TAWL). Positions 491-501 (SRTSSATSGLS) are enriched in polar residues.

The protein belongs to the CFAP97 family.

The protein is Cilia- and flagella-associated protein 97 of Pongo abelii (Sumatran orangutan).